A 217-amino-acid polypeptide reads, in one-letter code: Small ribosomal subunit protein uS11m (217 aa).

The transit peptide at 1-59 (MLLQPVWKGCRWTQFVRPIRRWNSTGTNRGVPFSFKDISNQEDITNISYPSSSDSVLTK) directs the protein to the mitochondrion.

It belongs to the universal ribosomal protein uS11 family. In terms of assembly, component of the mitochondrial small ribosomal subunit (mt-SSU). Mature yeast 74S mitochondrial ribosomes consist of a small (37S) and a large (54S) subunit. The 37S small subunit contains a 15S ribosomal RNA (15S mt-rRNA) and 34 different proteins. The 54S large subunit contains a 21S rRNA (21S mt-rRNA) and 46 different proteins.

It localises to the mitochondrion. Component of the mitochondrial ribosome (mitoribosome), a dedicated translation machinery responsible for the synthesis of mitochondrial genome-encoded proteins, including at least some of the essential transmembrane subunits of the mitochondrial respiratory chain. The mitoribosomes are attached to the mitochondrial inner membrane and translation products are cotranslationally integrated into the membrane. The sequence is that of Small ribosomal subunit protein uS11m (MRPS18) from Saccharomyces cerevisiae (strain ATCC 204508 / S288c) (Baker's yeast).